The chain runs to 421 residues: Inhibitor of growth protein 3 (421 aa).

The segment at proline 129 to lysine 164 is disordered. Residues lysine 148, lysine 165, and lysine 167 each participate in a glycyl lysine isopeptide (Lys-Gly) (interchain with G-Cter in SUMO2) cross-link. At lysine 181 the chain carries N6-acetyllysine. Lysine 256 participates in a covalent cross-link: Glycyl lysine isopeptide (Lys-Gly) (interchain with G-Cter in SUMO2). Residue lysine 264 is modified to N6-acetyllysine. Residues threonine 286–serine 324 form a disordered region. Over residues serine 308–serine 324 the composition is skewed to low complexity. The PHD-type zinc-finger motif lies at proline 363–alanine 412. Positions 366, 368, 379, 384, 390, 393, 406, and 409 each coordinate Zn(2+).

Belongs to the ING family. Interacts with H3K4me3 and to a lesser extent with H3K4me2. Component of the NuA4 histone acetyltransferase complex which contains the catalytic subunit KAT5/TIP60 and the subunits EP400, TRRAP/PAF400, BRD8/SMAP, EPC1, DMAP1/DNMAP1, RUVBL1/TIP49, RUVBL2, ING3, actin, ACTL6A/BAF53A, MORF4L1/MRG15, MORF4L2/MRGX, MRGBP, YEATS4/GAS41, VPS72/YL1 and MEAF6. The NuA4 complex interacts with MYC. HTATTIP/TIP60, EPC1, and ING3 together constitute a minimal HAT complex termed Piccolo NuA4. Component of a SWR1-like complex.

The protein localises to the nucleus. Its function is as follows. Component of the NuA4 histone acetyltransferase (HAT) complex which is involved in transcriptional activation of select genes principally by acetylation of nucleosomal histones H4 and H2A. This modification may both alter nucleosome - DNA interactions and promote interaction of the modified histones with other proteins which positively regulate transcription. This complex may be required for the activation of transcriptional programs associated with oncogene and proto-oncogene mediated growth induction, tumor suppressor mediated growth arrest and replicative senescence, apoptosis, and DNA repair. NuA4 may also play a direct role in DNA repair when directly recruited to sites of DNA damage. Component of a SWR1-like complex that specifically mediates the removal of histone H2A.Z/H2AZ1 from the nucleosome. The polypeptide is Inhibitor of growth protein 3 (Ing3) (Rattus norvegicus (Rat)).